The sequence spans 144 residues: Large ribosomal subunit protein uL13 (144 aa).

Belongs to the universal ribosomal protein uL13 family. Part of the 50S ribosomal subunit.

Functionally, this protein is one of the early assembly proteins of the 50S ribosomal subunit, although it is not seen to bind rRNA by itself. It is important during the early stages of 50S assembly. This chain is Large ribosomal subunit protein uL13, found in Mycoplasmopsis synoviae (strain 53) (Mycoplasma synoviae).